The primary structure comprises 73 residues: UPF0499 protein NFIA_054990 (73 aa).

Positions 1–20 (MKSFNLLSLSLLLAIASAAA) are cleaved as a signal peptide. Intrachain disulfides connect Cys46–Cys60, Cys50–Cys63, and Cys56–Cys70.

Belongs to the UPF0499 family.

Its subcellular location is the secreted. The chain is UPF0499 protein NFIA_054990 from Neosartorya fischeri (strain ATCC 1020 / DSM 3700 / CBS 544.65 / FGSC A1164 / JCM 1740 / NRRL 181 / WB 181) (Aspergillus fischerianus).